Here is a 1193-residue protein sequence, read N- to C-terminus: DNA polymerase (1193 aa).

The disordered stretch occupies residues 1 to 88; it reads MALVQTHGSR…PAKKKRGTVV (88 aa). The segment covering 48-68 has biased composition (low complexity); it reads PATTASGSRAAPTARRASSPP.

Belongs to the DNA polymerase type-B family. In terms of assembly, heterodimer with the terminal protein; this heterodimer binds to bp 9 to 18 of the genome. Forms a complex with viral pTP, DBP and hosts NFIA and POU2F1/OCT1 for initiation of replication.

Its subcellular location is the host nucleus. It catalyses the reaction DNA(n) + a 2'-deoxyribonucleoside 5'-triphosphate = DNA(n+1) + diphosphate. Its function is as follows. Eukaryotic-type DNA polymerase involved in viral genomic replication. DNA synthesis is protein primed, and acts in a strand displacement replication. Assembles in complex with viral pTP, DBP, host NFIA and host POU2F1/OCT1 on viral origin of replication. The polymerase covalently transfers dCMP onto pTP, thereby initiating complementary strand synthesis. The polypeptide is DNA polymerase (Homo sapiens (Human)).